A 118-amino-acid polypeptide reads, in one-letter code: Small ribosomal subunit protein uS13 (118 aa).

The segment at 94–118 (GLPLRGQRTKTNARTRKGPRKPIRK) is disordered.

It belongs to the universal ribosomal protein uS13 family. As to quaternary structure, part of the 30S ribosomal subunit. Forms a loose heterodimer with protein S19. Forms two bridges to the 50S subunit in the 70S ribosome.

Its function is as follows. Located at the top of the head of the 30S subunit, it contacts several helices of the 16S rRNA. In the 70S ribosome it contacts the 23S rRNA (bridge B1a) and protein L5 of the 50S subunit (bridge B1b), connecting the 2 subunits; these bridges are implicated in subunit movement. Contacts the tRNAs in the A and P-sites. This chain is Small ribosomal subunit protein uS13, found in Chromohalobacter salexigens (strain ATCC BAA-138 / DSM 3043 / CIP 106854 / NCIMB 13768 / 1H11).